The primary structure comprises 1147 residues: Nucleolar protein 6 (1147 aa).

The segment at 1-49 is disordered; that stretch reads MQKKRSRAGAAEQEAASDDGEMSDSSDKMEVSQNKGKSGIKRAPEADDV. Residues 15 to 24 are compositionally biased toward acidic residues; the sequence is AASDDGEMSD.

Belongs to the NRAP family. Part of the small subunit (SSU) processome, composed of more than 70 proteins and the RNA chaperone small nucleolar RNA (snoRNA) U3.

It is found in the nucleus. It localises to the nucleolus. The protein resides in the chromosome. Part of the small subunit (SSU) processome, first precursor of the small eukaryotic ribosomal subunit. During the assembly of the SSU processome in the nucleolus, many ribosome biogenesis factors, an RNA chaperone and ribosomal proteins associate with the nascent pre-rRNA and work in concert to generate RNA folding, modifications, rearrangements and cleavage as well as targeted degradation of pre-ribosomal RNA by the RNA exosome. This Xenopus laevis (African clawed frog) protein is Nucleolar protein 6 (nol6).